The sequence spans 729 residues: Methionine--tRNA ligase (729 aa).

The short motif at 12-22 (PYVNNIPHLGN) is the 'HIGH' region element. Residues cysteine 143, cysteine 146, cysteine 155, and cysteine 158 each contribute to the Zn(2+) site. The short motif at 330-334 (KFSKS) is the 'KMSKS' region element. Residue lysine 333 coordinates ATP. Residues 565–670 (FSEQVCLKVV…DNPIPGERII (106 aa)) enclose the tRNA-binding domain.

Belongs to the class-I aminoacyl-tRNA synthetase family. MetG type 1 subfamily. As to quaternary structure, homodimer. Zn(2+) is required as a cofactor.

It is found in the cytoplasm. It carries out the reaction tRNA(Met) + L-methionine + ATP = L-methionyl-tRNA(Met) + AMP + diphosphate. In terms of biological role, is required not only for elongation of protein synthesis but also for the initiation of all mRNA translation through initiator tRNA(fMet) aminoacylation. The sequence is that of Methionine--tRNA ligase from Borrelia hermsii (strain HS1 / DAH).